Consider the following 688-residue polypeptide: MATSSHQGAAAGSQAEHRSCEASVGQGERPSASQGQEGNFKQNQGTSTLRLLLLGKQGAGKSATGNTILGKAVFESKFSDHMVTDRCQSESVSVRGKQVIVIDTPDLFSSLSCSEVRQQNLKQCLELLADDHCVLLLVTPIGHYTEEDRETIEGIWGKIGPKAYRHMIVVFTREDELDEDSLWNYIESKESLKELIKNIGSRRCCTFNNKADKKQRELQVFKLLDAIELLMMESPEPYFEPLKMESSGVQGCGNGVTYEGDTLCGSKKRQPQITGPDCDPDMPELRVLLMGKRGVGKSAAGNSILGKQVFKTQFSEKQRVTKAFASHSRVWQGKKVLIIDSPEISSWKLDESAVKNHTFPGPHAFLLVTPLGSSLKSDDDVFSIIKRIFGEKFTKFTIVLFTRKEDFEDQALDKVIKENDALYNLTQKFGERYAIFNYRASVEEEQSQVGKLLSQIEKMVQCHSNKPCVIREKELLNIILLGRSGAGKSATGNTILGRSAFFSQLRAQPVTSSSQSGKRTLDWQDVVVVDTPSFIQTPGTEKDPSRLKEEIHHCLSLCEEGMKIFVLVLQLGRFTQEDEVVVEQLEASFEENIMKYMIVLFTRKEDLGDGDLHDYTNNTKNKALKKILKKCNGRVCAFNNKETGEDQETQVKGLLKIANSLKKNYDEHSNSWVGQLKSTLGQITMAFK.

The span at 1-14 shows a compositional bias: low complexity; the sequence is MATSSHQGAAAGSQ. The interval 1-42 is disordered; sequence MATSSHQGAAAGSQAEHRSCEASVGQGERPSASQGQEGNFKQ. The span at 31–42 shows a compositional bias: polar residues; that stretch reads SASQGQEGNFKQ. 3 AIG1-type G domains span residues 46–247, 282–472, and 473–677; these read TSTL…MESS, MPEL…VIRE, and KELL…GQLK. The tract at residues 55–62 is G1; it reads GKQGAGKS. Residues 55 to 63 and S76 contribute to the GTP site; that span reads GKQGAGKSA. The segment at 82 to 86 is G2; that stretch reads MVTDR. Residues 103-106 are G3; that stretch reads DTPD. The G4 stretch occupies residues 172–175; the sequence is TRED. GTP is bound by residues 173-175 and N209; that span reads RED. The G5 stretch occupies residues 208–210; it reads NNK.

Belongs to the TRAFAC class TrmE-Era-EngA-EngB-Septin-like GTPase superfamily. AIG1/Toc34/Toc159-like paraseptin GTPase family. IAN subfamily. As to expression, abundantly expressed in the thymus (in thymocytes), spleen (in splenocytes), lymph node, followed by bone marrow and lung.

Its subcellular location is the endoplasmic reticulum. The protein resides in the golgi apparatus. It is found in the mitochondrion. It localises to the cytoplasm. The protein localises to the cytosol. Functionally, exerts an anti-apoptotic effect in the immune system and is involved in responses to infections. The polypeptide is GTPase IMAP family member 8 (Gimap8) (Mus musculus (Mouse)).